Consider the following 741-residue polypeptide: Polyribonucleotide nucleotidyltransferase (741 aa).

D489 and D495 together coordinate Mg(2+). Positions P556–I615 constitute a KH domain. The S1 motif domain maps to G625–K693. The segment at L696–E741 is disordered. Composition is skewed to basic and acidic residues over residues K698–H713 and H723–E741.

This sequence belongs to the polyribonucleotide nucleotidyltransferase family. The cofactor is Mg(2+).

The protein resides in the cytoplasm. It carries out the reaction RNA(n+1) + phosphate = RNA(n) + a ribonucleoside 5'-diphosphate. Involved in mRNA degradation. Catalyzes the phosphorolysis of single-stranded polyribonucleotides processively in the 3'- to 5'-direction. The chain is Polyribonucleotide nucleotidyltransferase from Streptococcus thermophilus (strain ATCC BAA-491 / LMD-9).